A 184-amino-acid chain; its full sequence is GTP cyclohydrolase 1 (184 aa).

Residues Cys75, His78, and Cys146 each coordinate Zn(2+).

It belongs to the GTP cyclohydrolase I family. As to quaternary structure, toroid-shaped homodecamer, composed of two pentamers of five dimers.

The enzyme catalyses GTP + H2O = 7,8-dihydroneopterin 3'-triphosphate + formate + H(+). It functions in the pathway cofactor biosynthesis; 7,8-dihydroneopterin triphosphate biosynthesis; 7,8-dihydroneopterin triphosphate from GTP: step 1/1. The sequence is that of GTP cyclohydrolase 1 from Chromohalobacter salexigens (strain ATCC BAA-138 / DSM 3043 / CIP 106854 / NCIMB 13768 / 1H11).